A 310-amino-acid chain; its full sequence is HPr kinase/phosphorylase (310 aa).

Residues His-136 and Lys-157 contribute to the active site. 151–158 contacts ATP; the sequence is GDSGIGKS. Mg(2+) is bound at residue Ser-158. The Proton acceptor; for phosphorylation activity. Proton donor; for dephosphorylation activity role is filled by Asp-175. Residues 199–208 are important for the catalytic mechanism of both phosphorylation and dephosphorylation; the sequence is LEIRGLGIIN. Glu-200 is a binding site for Mg(2+). Residue Arg-241 is part of the active site. An important for the catalytic mechanism of dephosphorylation region spans residues 262–267; that stretch reads PVRPGR.

The protein belongs to the HPrK/P family. In terms of assembly, homohexamer. The cofactor is Mg(2+).

The enzyme catalyses [HPr protein]-L-serine + ATP = [HPr protein]-O-phospho-L-serine + ADP + H(+). The catalysed reaction is [HPr protein]-O-phospho-L-serine + phosphate + H(+) = [HPr protein]-L-serine + diphosphate. Catalyzes the ATP- as well as the pyrophosphate-dependent phosphorylation of a specific serine residue in HPr, a phosphocarrier protein of the phosphoenolpyruvate-dependent sugar phosphotransferase system (PTS). HprK/P also catalyzes the pyrophosphate-producing, inorganic phosphate-dependent dephosphorylation (phosphorolysis) of seryl-phosphorylated HPr (P-Ser-HPr). The two antagonistic activities of HprK/P are regulated by several intracellular metabolites, which change their concentration in response to the absence or presence of rapidly metabolisable carbon sources (glucose, fructose, etc.) in the growth medium. Therefore, by controlling the phosphorylation state of HPr, HPrK/P is a sensor enzyme that plays a major role in the regulation of carbon metabolism and sugar transport: it mediates carbon catabolite repression (CCR), and regulates PTS-catalyzed carbohydrate uptake and inducer exclusion. The sequence is that of HPr kinase/phosphorylase from Staphylococcus aureus (strain Mu3 / ATCC 700698).